The following is a 413-amino-acid chain: Tryptophan synthase beta chain (413 aa).

Lysine 106 is modified (N6-(pyridoxal phosphate)lysine).

Belongs to the TrpB family. As to quaternary structure, tetramer of two alpha and two beta chains. Requires pyridoxal 5'-phosphate as cofactor.

It carries out the reaction (1S,2R)-1-C-(indol-3-yl)glycerol 3-phosphate + L-serine = D-glyceraldehyde 3-phosphate + L-tryptophan + H2O. It functions in the pathway amino-acid biosynthesis; L-tryptophan biosynthesis; L-tryptophan from chorismate: step 5/5. Functionally, the beta subunit is responsible for the synthesis of L-tryptophan from indole and L-serine. In Methylobacterium radiotolerans (strain ATCC 27329 / DSM 1819 / JCM 2831 / NBRC 15690 / NCIMB 10815 / 0-1), this protein is Tryptophan synthase beta chain.